The primary structure comprises 161 residues: Ribosome maturation factor RimP (161 aa).

Belongs to the RimP family.

The protein resides in the cytoplasm. Its function is as follows. Required for maturation of 30S ribosomal subunits. The polypeptide is Ribosome maturation factor RimP (Rickettsia typhi (strain ATCC VR-144 / Wilmington)).